The primary structure comprises 1178 residues: Niemann-Pick type C1-related protein (1178 aa).

An N-linked (GlcNAc...) asparagine glycan is attached at Asn41. 2 helical membrane passes run 157–177 (PWLF…GIFL) and 412–432 (VVEW…TSVV). In terms of domain architecture, SSD spans 414–570 (EWLRLCAAVL…LTFFLAGLSL (157 aa)). An N-linked (GlcNAc...) asparagine glycan is attached at Asn433. 4 helical membrane passes run 448-468 (GALA…LCGV), 478-498 (PFLA…AYSL), 516-536 (AGLS…IGAL), and 545-565 (FCII…TFFL). Asn621 is a glycosylation site (N-linked (GlcNAc...) asparagine). A helical membrane pass occupies residues 789–809 (ATVLVIFAAVTALAIYGATTL). Asn917 and Asn943 each carry an N-linked (GlcNAc...) asparagine glycan. 5 helical membrane passes run 986–1006 (FTLT…LLLI), 1013–1033 (IIVV…MALI), 1037–1057 (LSMI…DFTI), 1080–1100 (IVMG…ILAL), and 1114–1134 (MMFM…PVVL).

The protein belongs to the patched family.

The protein localises to the inner membrane complex. The catalysed reaction is cholesterol(in) = cholesterol(out). Its function is as follows. Likely facilitates the efflux of cholesterol and gangliosides from membranes. Plays a role in the regulation of lipid homeostasis. This is Niemann-Pick type C1-related protein from Toxoplasma gondii (strain ATCC 50611 / Me49).